A 333-amino-acid polypeptide reads, in one-letter code: Delta(9)-fatty-acid desaturase fat-5 (333 aa).

Transmembrane regions (helical) follow at residues 42–62 (NVAL…QLVF), 66–86 (WATV…VTGG), 187–207 (LPLV…VLWG), and 210–230 (AFIA…HATW).

This sequence belongs to the fatty acid desaturase type 1 family. Expressed in the intestine in adult worms and in all four larval stages. Additional expression in the pharynx and tail cells after hatching and throughout the lifespan.

It is found in the membrane. The catalysed reaction is hexadecanoyl-CoA + 2 Fe(II)-[cytochrome b5] + O2 + 2 H(+) = (9Z)-hexadecenoyl-CoA + 2 Fe(III)-[cytochrome b5] + 2 H2O. It catalyses the reaction tetradecanoyl-CoA + 2 Fe(II)-[cytochrome b5] + O2 + 2 H(+) = (9Z)-tetradecenoyl-CoA + 2 Fe(III)-[cytochrome b5] + 2 H2O. It carries out the reaction heptadecanoyl-CoA + 2 Fe(II)-[cytochrome b5] + O2 + 2 H(+) = (9Z)-heptadecenoyl-CoA + 2 Fe(III)-[cytochrome b5] + 2 H2O. The enzyme catalyses pentadecanoyl-CoA + 2 Fe(II)-[cytochrome b5] + O2 + 2 H(+) = (9Z)-pentadecenoyl-CoA + 2 Fe(III)-[cytochrome b5] + 2 H2O. It functions in the pathway lipid metabolism; monounsaturated fatty acid biosynthesis. Its function is as follows. Delta(9)-fatty acid desaturase that acts preferentially on palmitoyl-CoA (hexadecanoyl-CoA) producing the monounsaturated palmitoleoyl-CoA ((9Z)-hexadecenoyl-CoA), which can be elongated to (11Z)-octadecenoyl-CoA (the most abundant monounsaturated fatty acid in Caenorhabditis elegans phospholipids and triacylglycerols). Also acts on pentadecanoyl-CoA, heptadecanoyl-CoA and myristoyl-CoA (tetradecanoyl-CoA), the monounsaturated fatty acids (MUFAs) produced are further used as substrates to synthesize polyunsaturated fatty acids (PUFAs) by several other desaturases and elongases. Unlike plants, Caenorhabditis elegans desaturases seem to use fatty acyl-CoAs as substrates. This chain is Delta(9)-fatty-acid desaturase fat-5 (fat-5), found in Caenorhabditis elegans.